A 160-amino-acid polypeptide reads, in one-letter code: 2-amino-4-hydroxy-6-hydroxymethyldihydropteridine pyrophosphokinase (160 aa).

Belongs to the HPPK family.

The catalysed reaction is 6-hydroxymethyl-7,8-dihydropterin + ATP = (7,8-dihydropterin-6-yl)methyl diphosphate + AMP + H(+). The protein operates within cofactor biosynthesis; tetrahydrofolate biosynthesis; 2-amino-4-hydroxy-6-hydroxymethyl-7,8-dihydropteridine diphosphate from 7,8-dihydroneopterin triphosphate: step 4/4. Functionally, catalyzes the transfer of pyrophosphate from adenosine triphosphate (ATP) to 6-hydroxymethyl-7,8-dihydropterin, an enzymatic step in folate biosynthesis pathway. This Aquifex aeolicus (strain VF5) protein is 2-amino-4-hydroxy-6-hydroxymethyldihydropteridine pyrophosphokinase (folK).